Consider the following 262-residue polypeptide: Small ribosomal subunit protein eS1 (262 aa).

It belongs to the eukaryotic ribosomal protein eS1 family. As to quaternary structure, component of the small ribosomal subunit. Mature ribosomes consist of a small (40S) and a large (60S) subunit. The 40S subunit contains about 33 different proteins and 1 molecule of RNA (18S). The 60S subunit contains about 49 different proteins and 3 molecules of RNA (25S, 5.8S and 5S).

The protein localises to the cytoplasm. In Plasmodium knowlesi (strain H), this protein is Small ribosomal subunit protein eS1.